The following is a 522-amino-acid chain: DNA primase DnaG (522 aa).

In terms of domain architecture, Toprim spans 171–257; the sequence is DAIIILEGRA…CVEDLVQKEI (87 aa). Mg(2+) contacts are provided by glutamate 177, aspartate 219, and aspartate 221.

It belongs to the archaeal DnaG primase family. As to quaternary structure, forms a ternary complex with MCM helicase and DNA. Component of the archaeal exosome complex. Requires Mg(2+) as cofactor.

It catalyses the reaction ssDNA + n NTP = ssDNA/pppN(pN)n-1 hybrid + (n-1) diphosphate.. RNA polymerase that catalyzes the synthesis of short RNA molecules used as primers for DNA polymerase during DNA replication. Also part of the exosome, which is a complex involved in RNA degradation. Acts as a poly(A)-binding protein that enhances the interaction between heteromeric, adenine-rich transcripts and the exosome. The sequence is that of DNA primase DnaG from Methanosarcina mazei (strain ATCC BAA-159 / DSM 3647 / Goe1 / Go1 / JCM 11833 / OCM 88) (Methanosarcina frisia).